The primary structure comprises 232 residues: Thiamine import ATP-binding protein ThiQ (232 aa).

The 229-residue stretch at 2–230 (LKLTDITWLY…KASASAILGI (229 aa)) folds into the ABC transporter domain. An ATP-binding site is contributed by 32 to 39 (GPSGAGKS).

Belongs to the ABC transporter superfamily. Thiamine importer (TC 3.A.1.19.1) family. In terms of assembly, the complex is composed of two ATP-binding proteins (ThiQ), two transmembrane proteins (ThiP) and a solute-binding protein (ThiB).

The protein resides in the cell inner membrane. It carries out the reaction thiamine(out) + ATP + H2O = thiamine(in) + ADP + phosphate + H(+). Its function is as follows. Part of the ABC transporter complex ThiBPQ involved in thiamine import. Responsible for energy coupling to the transport system. The polypeptide is Thiamine import ATP-binding protein ThiQ (Shigella flexneri serotype 5b (strain 8401)).